The following is a 564-amino-acid chain: Urocanate hydratase (564 aa).

NAD(+)-binding positions include 58 to 59 (GG), glutamine 136, 182 to 184 (GMG), glutamate 202, arginine 207, 248 to 249 (NA), 269 to 273 (QTSAH), 279 to 280 (YL), and tyrosine 328. Cysteine 416 is an active-site residue. Glycine 498 is an NAD(+) binding site.

The protein belongs to the urocanase family. NAD(+) is required as a cofactor.

It is found in the cytoplasm. The catalysed reaction is 4-imidazolone-5-propanoate = trans-urocanate + H2O. The protein operates within amino-acid degradation; L-histidine degradation into L-glutamate; N-formimidoyl-L-glutamate from L-histidine: step 2/3. Its function is as follows. Catalyzes the conversion of urocanate to 4-imidazolone-5-propionate. In Aliivibrio salmonicida (strain LFI1238) (Vibrio salmonicida (strain LFI1238)), this protein is Urocanate hydratase.